We begin with the raw amino-acid sequence, 1051 residues long: Exportin-T (1051 aa).

It belongs to the exportin family.

The protein localises to the nucleus. It is found in the cytoplasm. In terms of biological role, tRNA nucleus export receptor which facilitates tRNA translocation across the nuclear pore complex. Involved in pre-tRNA splicing, probably by affecting the interaction of pre-tRNA with splicing endonuclease. In Eremothecium gossypii (strain ATCC 10895 / CBS 109.51 / FGSC 9923 / NRRL Y-1056) (Yeast), this protein is Exportin-T (LOS1).